Reading from the N-terminus, the 68-residue chain is MPQLNTTVWPTMITPMLLTLFLITQLKMLNTNYHLPPSPKPMKMKNYNKPWEPKWTKICSLHSLPPQS.

The helical transmembrane segment at 8–21 (VWPTMITPMLLTLF) threads the bilayer. Lysine 54 carries the post-translational modification N6-acetyllysine; alternate. Position 54 is an N6-succinyllysine; alternate (lysine 54). Lysine 57 is subject to N6-acetyllysine.

It belongs to the ATPase protein 8 family. Component of the ATP synthase complex composed at least of ATP5F1A/subunit alpha, ATP5F1B/subunit beta, ATP5MC1/subunit c (homooctomer), MT-ATP6/subunit a, MT-ATP8/subunit 8, ATP5ME/subunit e, ATP5MF/subunit f, ATP5MG/subunit g, ATP5MK/subunit k, ATP5MJ/subunit j, ATP5F1C/subunit gamma, ATP5F1D/subunit delta, ATP5F1E/subunit epsilon, ATP5PF/subunit F6, ATP5PB/subunit b, ATP5PD/subunit d, ATP5PO/subunit OSCP. ATP synthase complex consists of a soluble F(1) head domain (subunits alpha(3) and beta(3)) - the catalytic core - and a membrane F(0) domain - the membrane proton channel (subunits c, a, 8, e, f, g, k and j). These two domains are linked by a central stalk (subunits gamma, delta, and epsilon) rotating inside the F1 region and a stationary peripheral stalk (subunits F6, b, d, and OSCP). Interacts with PRICKLE3.

It is found in the mitochondrion membrane. Functionally, subunit 8, of the mitochondrial membrane ATP synthase complex (F(1)F(0) ATP synthase or Complex V) that produces ATP from ADP in the presence of a proton gradient across the membrane which is generated by electron transport complexes of the respiratory chain. ATP synthase complex consist of a soluble F(1) head domain - the catalytic core - and a membrane F(1) domain - the membrane proton channel. These two domains are linked by a central stalk rotating inside the F(1) region and a stationary peripheral stalk. During catalysis, ATP synthesis in the catalytic domain of F(1) is coupled via a rotary mechanism of the central stalk subunits to proton translocation. In vivo, can only synthesize ATP although its ATP hydrolase activity can be activated artificially in vitro. Part of the complex F(0) domain. The sequence is that of ATP synthase F(0) complex subunit 8 from Homo sapiens (Human).